The chain runs to 168 residues: Anti-sigma-F factor RsbW (168 aa).

Residues 1-31 (MTDQLEDQTQGGSTVDRSLPGGCMADSDLPT) form a disordered region. Over residues 7-16 (DQTQGGSTVD) the composition is skewed to polar residues. 124–128 (PGSFS) is a binding site for ATP.

It belongs to the anti-sigma-factor family. Homodimer.

Functionally, a cognate anti-sigma factor for alternative sigma factor SigF. Alternative sigma factors are held in an inactive form by an anti-sigma factor. Binds ATP and GTP, may hydrolyze both. This chain is Anti-sigma-F factor RsbW (rsbW), found in Mycobacterium tuberculosis (strain CDC 1551 / Oshkosh).